We begin with the raw amino-acid sequence, 103 residues long: UPF0145 protein NT01CX_0170 (103 aa).

It belongs to the UPF0145 family.

In Clostridium novyi (strain NT), this protein is UPF0145 protein NT01CX_0170.